A 247-amino-acid polypeptide reads, in one-letter code: E3 ubiquitin-protein ligase RNF182 (247 aa).

The segment at 20–68 adopts an RING-type zinc-finger fold; the sequence is CKICYNRYNLKQRKPKVLECCHRVCAKCLYKIIDFGDSPQGVIVCPFCR. 2 consecutive transmembrane segments (helical) span residues 184–204 and 211–231; these read VLVWLLGLLYFSSLPLGIYLL and LGVVFVSLVPSSLVILMVYGF.

Interacts with ATP6V0C.

Its subcellular location is the membrane. The protein resides in the cytoplasm. It carries out the reaction S-ubiquitinyl-[E2 ubiquitin-conjugating enzyme]-L-cysteine + [acceptor protein]-L-lysine = [E2 ubiquitin-conjugating enzyme]-L-cysteine + N(6)-ubiquitinyl-[acceptor protein]-L-lysine.. It participates in protein modification; protein ubiquitination. In terms of biological role, E3 ubiquitin-protein ligase that mediates the ubiquitination of ATP6V0C and targets it to degradation via the ubiquitin-proteasome pathway. Also plays a role in the inhibition of TLR-triggered innate immune response by mediating 'Lys'-48-linked ubiquitination and subsequent degradation of NF-kappa-B component RELA. The sequence is that of E3 ubiquitin-protein ligase RNF182 (RNF182) from Ailuropoda melanoleuca (Giant panda).